The following is a 183-amino-acid chain: Large ribosomal subunit protein uL6 (183 aa).

Belongs to the universal ribosomal protein uL6 family. In terms of assembly, part of the 50S ribosomal subunit.

In terms of biological role, this protein binds to the 23S rRNA, and is important in its secondary structure. It is located near the subunit interface in the base of the L7/L12 stalk, and near the tRNA binding site of the peptidyltransferase center. This chain is Large ribosomal subunit protein uL6, found in Chlamydia trachomatis serovar L2 (strain ATCC VR-902B / DSM 19102 / 434/Bu).